Consider the following 146-residue polypeptide: Hemoglobin subunit beta (146 aa).

The Globin domain occupies 2–146 (FLTAEEKSLV…VANALAHKYH (145 aa)). A Phosphoserine modification is found at Ser44. Lys59 carries the post-translational modification N6-acetyllysine. His63 lines the heme b pocket. Lys82 is subject to N6-acetyllysine. A heme b-binding site is contributed by His92. Cys93 is subject to S-nitrosocysteine. Lys144 bears the N6-acetyllysine mark.

The protein belongs to the globin family. Heterotetramer of two alpha chains and two beta chains. In terms of tissue distribution, red blood cells.

Functionally, involved in oxygen transport from the lung to the various peripheral tissues. The chain is Hemoglobin subunit beta (HBB) from Proteles cristata (Aardwolf).